Consider the following 510-residue polypeptide: Guanosine import ATP-binding protein NupO (510 aa).

2 ABC transporter domains span residues 5 to 240 (IEML…VGRE) and 257 to 501 (LAID…AGST). 37 to 44 (GENGAGKS) contacts ATP.

This sequence belongs to the ABC transporter superfamily. The complex is composed of two ATP-binding proteins (NupO), two transmembrane proteins (NupP and NupQ) and a solute-binding protein (NupN).

Its subcellular location is the cell membrane. In terms of biological role, part of an ABC transporter complex involved in the uptake of guanosine. Responsible for energy coupling to the transport system. May be a nucleoside transporter of broad specificity but with various affinities for different substrates. The protein is Guanosine import ATP-binding protein NupO of Bacillus subtilis (strain 168).